We begin with the raw amino-acid sequence, 490 residues long: Glutamyl-tRNA(Gln) amidotransferase subunit A (490 aa).

Catalysis depends on charge relay system residues Lys-77 and Ser-152. Ser-176 (acyl-ester intermediate) is an active-site residue.

This sequence belongs to the amidase family. GatA subfamily. Heterotrimer of A, B and C subunits.

It catalyses the reaction L-glutamyl-tRNA(Gln) + L-glutamine + ATP + H2O = L-glutaminyl-tRNA(Gln) + L-glutamate + ADP + phosphate + H(+). Functionally, allows the formation of correctly charged Gln-tRNA(Gln) through the transamidation of misacylated Glu-tRNA(Gln) in organisms which lack glutaminyl-tRNA synthetase. The reaction takes place in the presence of glutamine and ATP through an activated gamma-phospho-Glu-tRNA(Gln). In Limosilactobacillus reuteri (strain DSM 20016) (Lactobacillus reuteri), this protein is Glutamyl-tRNA(Gln) amidotransferase subunit A.